The following is a 219-amino-acid chain: Tetratricopeptide repeat protein 9A (219 aa).

The interval 1–49 (MERKGLAARSSGNPSPPALGEGPRPVPPPCVPSGGGAPERGQAGTAAEP) is disordered. One copy of the TPR 1 repeat lies at 56–89 (AHEFKSQGAQCYKDKKFREAIGKYHRALLELKGL). The disordered stretch occupies residues 94–115 (EERDARPASSAGVPKSSRLSEE). Serine 102 bears the Phosphoserine mark. 2 TPR repeats span residues 125-160 (IDCY…EGEN) and 161-194 (FKAL…QPTD).

Belongs to the TTC9 family.

The polypeptide is Tetratricopeptide repeat protein 9A (Ttc9) (Mus musculus (Mouse)).